The following is a 156-amino-acid chain: Small ribosomal subunit protein uS7c (156 aa).

This sequence belongs to the universal ribosomal protein uS7 family. As to quaternary structure, part of the 30S ribosomal subunit.

It is found in the plastid. It localises to the chloroplast. Its function is as follows. One of the primary rRNA binding proteins, it binds directly to 16S rRNA where it nucleates assembly of the head domain of the 30S subunit. The protein is Small ribosomal subunit protein uS7c (rps7) of Phaeodactylum tricornutum (strain CCAP 1055/1).